The following is a 257-amino-acid chain: Imidazole glycerol phosphate synthase subunit HisF (257 aa).

Active-site residues include aspartate 11 and aspartate 130.

The protein belongs to the HisA/HisF family. As to quaternary structure, heterodimer of HisH and HisF.

It localises to the cytoplasm. It carries out the reaction 5-[(5-phospho-1-deoxy-D-ribulos-1-ylimino)methylamino]-1-(5-phospho-beta-D-ribosyl)imidazole-4-carboxamide + L-glutamine = D-erythro-1-(imidazol-4-yl)glycerol 3-phosphate + 5-amino-1-(5-phospho-beta-D-ribosyl)imidazole-4-carboxamide + L-glutamate + H(+). It participates in amino-acid biosynthesis; L-histidine biosynthesis; L-histidine from 5-phospho-alpha-D-ribose 1-diphosphate: step 5/9. Its function is as follows. IGPS catalyzes the conversion of PRFAR and glutamine to IGP, AICAR and glutamate. The HisF subunit catalyzes the cyclization activity that produces IGP and AICAR from PRFAR using the ammonia provided by the HisH subunit. In Tolumonas auensis (strain DSM 9187 / NBRC 110442 / TA 4), this protein is Imidazole glycerol phosphate synthase subunit HisF.